The sequence spans 471 residues: Putative multidrug resistance protein MdtD (471 aa).

Topologically, residues Met1–Gln11 are periplasmic. Residues Leu12–Ala32 form a helical membrane-spanning segment. Residues Leu33–His48 lie on the Cytoplasmic side of the membrane. The helical transmembrane segment at Met49–Ala69 threads the bilayer. Over Asp70 to Asn76 the chain is Periplasmic. A helical membrane pass occupies residues Ile77–Thr97. The Cytoplasmic portion of the chain corresponds to Leu98–Leu101. Residues Leu102–Met124 form a helical membrane-spanning segment. The Periplasmic segment spans residues Lys125–Thr137. The helical transmembrane segment at Phe138–Val158 threads the bilayer. At Glu159–His164 the chain is on the cytoplasmic side. A helical membrane pass occupies residues Trp165 to Met185. The Periplasmic portion of the chain corresponds to Pro186–Asp196. The chain crosses the membrane as a helical span at residues Leu197–Ser217. Residues Lys218–Pro224 lie on the Cytoplasmic side of the membrane. The helical transmembrane segment at Leu225 to Ala245 threads the bilayer. Over Arg246–Thr262 the chain is Periplasmic. A helical transmembrane segment spans residues Phe263–Met283. Over Thr284–Pro285 the chain is Cytoplasmic. The helical transmembrane segment at Val286–Met306 threads the bilayer. Over Val307–Thr341 the chain is Periplasmic. The chain crosses the membrane as a helical span at residues Leu342–Leu362. The Cytoplasmic portion of the chain corresponds to Gln363–Ser395. A helical transmembrane segment spans residues Met396–Phe416. Over Gly417–Thr430 the chain is Periplasmic. Residues Val431 to Ala451 traverse the membrane as a helical segment. Over Arg452 to Gln471 the chain is Cytoplasmic.

The protein belongs to the major facilitator superfamily. TCR/Tet family.

The protein localises to the cell inner membrane. This Escherichia coli O17:K52:H18 (strain UMN026 / ExPEC) protein is Putative multidrug resistance protein MdtD.